We begin with the raw amino-acid sequence, 363 residues long: Type-1 angiotensin II receptor B (363 aa).

Residues 1–27 (MLSNISAGENSEVEKIVVKCSKSGMHN) are Extracellular-facing. N-linked (GlcNAc...) asparagine glycosylation is present at asparagine 4. Disulfide bonds link cysteine 20-cysteine 274 and cysteine 103-cysteine 182. Residues 28 to 57 (YIFITIPIIYSTIFVVGVFGNSLVVIVIYS) form a helical membrane-spanning segment. At 58-63 (YMKMKT) the chain is on the cytoplasmic side. The chain crosses the membrane as a helical span at residues 64-91 (MASVFLMNLALSDLCFVITLPLWAVYTA). The Extracellular portion of the chain corresponds to 92 to 100 (MHYHWPFGD). The chain crosses the membrane as a helical span at residues 101-127 (LLCKIASTAITLNLYTTVFLLTCLSID). The Cytoplasmic portion of the chain corresponds to 128-143 (RYSAIVHPMKSRIRRT). Residues 144-167 (VMVARLTCVGIWLVAFLASLPSVI) traverse the membrane as a helical segment. At 168–192 (YRQIFIFPDTNQTVCALVYHSGHIY) the chain is on the extracellular side. Position 169 (arginine 169) interacts with angiotensin II. Residue asparagine 178 is glycosylated (N-linked (GlcNAc...) asparagine). Positions 186 and 201 each coordinate angiotensin II. The chain crosses the membrane as a helical span at residues 193–218 (FMVGMSLVKNIVGFFIPFVIILTSYT). Over 219–239 (LIGKTLKEVYRAQRARNDDIF) the chain is Cytoplasmic. A helical membrane pass occupies residues 240–268 (KMIVAVVLLFFFCWIPHQVFTFLDVLIQM). Topologically, residues 269–278 (DVIQNCKMYD) are extracellular. The chain crosses the membrane as a helical span at residues 279–304 (IVDTGMPITICIAYFNSCLNPFLYGF). Residues 305-363 (FGKKFRKHFLQLIKYIPPKMRTHASVNTKSSTVSQRLSDTKCASNKIALWIFDIEEHCK) lie on the Cytoplasmic side of the membrane. 2 S-palmitoyl cysteine lipidation sites follow: cysteine 346 and cysteine 362.

It belongs to the G-protein coupled receptor 1 family. Post-translationally, C-terminal Ser or Thr residues may be phosphorylated. As to expression, heart membranes, follicular oocytes.

It localises to the cell membrane. In terms of biological role, receptor for angiotensin II, a vasoconstricting peptide, which acts as a key regulator of blood pressure and sodium retention by the kidney. The activated receptor in turn couples to G-alpha proteins G(q) (GNAQ, GNA11, GNA14 or GNA15) and thus activates phospholipase C and increases the cytosolic Ca(2+) concentrations, which in turn triggers cellular responses such as stimulation of protein kinase C. This is Type-1 angiotensin II receptor B (agtr1-b) from Xenopus laevis (African clawed frog).